The sequence spans 832 residues: Polyphosphoinositide phosphatase (832 aa).

In terms of domain architecture, SAC spans 145 to 491; sequence IEKVDLARTF…GDAIALQYGG (347 aa).

In terms of assembly, component of the PI(3,5)P2 regulatory complex. Mg(2+) is required as a cofactor.

The protein resides in the cytoplasm. It localises to the vacuole membrane. The enzyme catalyses a 1,2-diacyl-sn-glycero-3-phospho-(1D-myo-inositol-3,5-bisphosphate) + H2O = a 1,2-diacyl-sn-glycero-3-phospho-(1D-myo-inositol-3-phosphate) + phosphate. The PI(3,5)P2 regulatory complex regulates both the synthesis and turnover of phosphatidylinositol 3,5-bisphosphate (PtdIns(3,5)P2). This Schizosaccharomyces pombe (strain 972 / ATCC 24843) (Fission yeast) protein is Polyphosphoinositide phosphatase.